Consider the following 360-residue polypeptide: 3-isopropylmalate dehydrogenase (360 aa).

76–89 (GPKWDKLDMAIRPE) is an NAD(+) binding site. Substrate-binding residues include R96, R106, R134, and D224. Residues D224, D248, and D252 each coordinate Mg(2+). 282–294 (GSAPDIAGQNMAN) contributes to the NAD(+) binding site.

Belongs to the isocitrate and isopropylmalate dehydrogenases family. LeuB type 1 subfamily. In terms of assembly, homodimer. Mg(2+) serves as cofactor. Requires Mn(2+) as cofactor.

It localises to the cytoplasm. It carries out the reaction (2R,3S)-3-isopropylmalate + NAD(+) = 4-methyl-2-oxopentanoate + CO2 + NADH. It functions in the pathway amino-acid biosynthesis; L-leucine biosynthesis; L-leucine from 3-methyl-2-oxobutanoate: step 3/4. Functionally, catalyzes the oxidation of 3-carboxy-2-hydroxy-4-methylpentanoate (3-isopropylmalate) to 3-carboxy-4-methyl-2-oxopentanoate. The product decarboxylates to 4-methyl-2 oxopentanoate. In Hahella chejuensis (strain KCTC 2396), this protein is 3-isopropylmalate dehydrogenase.